The chain runs to 314 residues: Ribonuclease Z (314 aa).

Zn(2+) is bound by residues histidine 62, histidine 64, aspartate 66, histidine 67, histidine 139, aspartate 210, and histidine 268. Catalysis depends on aspartate 66, which acts as the Proton acceptor.

The protein belongs to the RNase Z family. As to quaternary structure, homodimer. Requires Zn(2+) as cofactor.

It carries out the reaction Endonucleolytic cleavage of RNA, removing extra 3' nucleotides from tRNA precursor, generating 3' termini of tRNAs. A 3'-hydroxy group is left at the tRNA terminus and a 5'-phosphoryl group is left at the trailer molecule.. Its function is as follows. Zinc phosphodiesterase, which displays some tRNA 3'-processing endonuclease activity. Probably involved in tRNA maturation, by removing a 3'-trailer from precursor tRNA. The polypeptide is Ribonuclease Z (Acaryochloris marina (strain MBIC 11017)).